Here is a 375-residue protein sequence, read N- to C-terminus: Aminomethyltransferase (375 aa).

This sequence belongs to the GcvT family. In terms of assembly, the glycine cleavage system is composed of four proteins: P, T, L and H.

It carries out the reaction N(6)-[(R)-S(8)-aminomethyldihydrolipoyl]-L-lysyl-[protein] + (6S)-5,6,7,8-tetrahydrofolate = N(6)-[(R)-dihydrolipoyl]-L-lysyl-[protein] + (6R)-5,10-methylene-5,6,7,8-tetrahydrofolate + NH4(+). Functionally, the glycine cleavage system catalyzes the degradation of glycine. The polypeptide is Aminomethyltransferase (Symbiobacterium thermophilum (strain DSM 24528 / JCM 14929 / IAM 14863 / T)).